Consider the following 263-residue polypeptide: Endolytic peptidoglycan transglycosylase RlpA (263 aa).

An N-terminal signal peptide occupies residues 1-16 (MNRIYLYLLIVLILAG). Residue cysteine 17 is the site of N-palmitoyl cysteine attachment. Residue cysteine 17 is the site of S-diacylglycerol cysteine attachment. In terms of domain architecture, SPOR spans 182 to 257 (KNNALEYVIQ…AGYDSAFIKT (76 aa)).

It belongs to the RlpA family.

It localises to the cell membrane. Its function is as follows. Lytic transglycosylase with a strong preference for naked glycan strands that lack stem peptides. The chain is Endolytic peptidoglycan transglycosylase RlpA from Vibrio cholerae serotype O1 (strain ATCC 39315 / El Tor Inaba N16961).